A 1474-amino-acid chain; its full sequence is MGKNKLLHPSLVLLLLVLLPTDASVSGKPQYMVLVPSLLHTETTEKGCVLLSYLNETVTVSASLESVRGNRSLFTDLEAENDVLHCVAFAVPKSSSNEEVMFLTVQVKGPTQEFKKRTTVMVKNEDSLVFVQTDKSIYKPGQTVKFRVVSMDENFHPLNELIPLVYIQDPKGNRIAQWQSFQLEGGLKQFSFPLSSEPFQGSYKVVVQKKSGGRTEHPFTVEEFVLPKFEVQVTVPKIITILEEEMNVSVCGLYTYGKPVPGHVTVSICRKYSDASDCHGEDSQAFCEKFSGQLNSHGCFYQQVKTKVFQLKRKEYEMKLHTEAQIQEEGTVVELTGRQSSEITRTITKLSFVKVDSHFRQGIPFFGQVRLVDGKGVPIPNKVIFIRGNEANYYSNATTDEHGLVQFSINTTNVMGTSLTVRVNYKDRSPCYGYQWVSEEHEEAHHTAYLVFSPSKSFVHLEPMSHELPCGHTQTVQAHYILNGGTLLGLKKLSFYYLIMAKGGIVRTGTHGLLVKQEDMKGHFSISIPVKSDIAPVARLLIYAVLPTGDVIGDSAKYDVENCLANKVDLSFSPSQSLPASHAHLRVTAAPQSVCALRAVDQSVLLMKPDAELSASSVYNLLPEKDLTGFPGPLNDQDNEDCINRHNVYINGITYTPVSSTNEKDMYSFLEDMGLKAFTNSKIRKPKMCPQLQQYEMHGPEGLRVGFYESDVMGRGHARLVHVEEPHTETVRKYFPETWIWDLVVVNSAGVAEVGVTVPDTITEWKAGAFCLSEDAGLGISSTASLRAFQPFFVELTMPYSVIRGEAFTLKATVLNYLPKCIRVSVQLEASPAFLAVPVEKEQAPHCICANGRQTVSWAVTPKSLGNVNFTVSAEALESQELCGTEVPSVPEHGRKDTVIKPLLVEPEGLEKETTFNSLLCPSGGEVSEELSLKLPPNVVEESARASVSVLGDILGSAMQNTQNLLQMPYGCGEQNMVLFAPNIYVLDYLNETQQLTPEIKSKAIGYLNTGYQRQLNYKHYDGSYSTFGERYGRNQGNTWLTAFVLKTFAQARAYIFIDEAHITQALIWLSQRQKDNGCFRSSGSLLNNAIKGGVEDEVTLSAYITIALLEIPLTVTHPVVRNALFCLESAWKTAQEGDHGSHVYTKALLAYAFALAGNQDKRKEVLKSLNEEAVKKDNSVHWERPQKPKAPVGHFYEPQAPSAEVEMTSYVLLAYLTAQPAPTSEDLTSATNIVKWITKQQNAQGGFSSTQDTVVALHALSKYGAATFTRTGKAAQVTIQSSGTFSSKFQVDNNNRLLLQQVSLPELPGEYSMKVTGEGCVYLQTSLKYNILPEKEEFPFALGVQTLPQTCDEPKAHTSFQISLSVSYTGSRSASNMAIVDVKMVSGFIPLKPTVKMLERSNHVSRTEVSSNHVLIYLDKVSNQTLSLFFTVLQDVPVRDLKPAIVKVYDYYETDEFAIAEYNAPCSKDLGNA.

A signal peptide spans 1–23 (MGKNKLLHPSLVLLLLVLLPTDA). C48 and C86 form a disulfide bridge. N55 carries N-linked (GlcNAc...) (complex) asparagine glycosylation. N-linked (GlcNAc...) asparagine glycans are attached at residues N70 and N247. 2 cysteine pairs are disulfide-bonded: C251-C299 and C269-C287. 2 N-linked (GlcNAc...) asparagine glycosylation sites follow: N396 and N410. 8 disulfides stabilise this stretch: C470–C563, C595–C771, C642–C689, C821–C849, C847–C883, C921–C1321, C1079–C1127, and C1352–C1467. The tract at residues 690–728 (PQLQQYEMHGPEGLRVGFYESDVMGRGHARLVHVEEPHT) is bait region. Isoglutamyl lysine isopeptide (Gln-Lys) (interchain with K-? in other proteins) cross-links involve residues Q693 and Q694. 3 inhibitory regions span residues 704-709 (RVGFYE), 719-723 (RLVHV), and 730-735 (TVRKYF). N-linked (GlcNAc...) asparagine glycosylation occurs at N869. The segment at residues 972–975 (CGEQ) is a cross-link (isoglutamyl cysteine thioester (Cys-Gln)). N991 carries an N-linked (GlcNAc...) asparagine glycan. Residue N1424 is glycosylated (N-linked (GlcNAc...) (complex) asparagine).

Belongs to the protease inhibitor I39 (alpha-2-macroglobulin) family. In terms of assembly, homotetramer; disulfide-linked. Secreted in plasma.

It is found in the secreted. In terms of biological role, is able to inhibit all four classes of proteinases by a unique 'trapping' mechanism. This protein has a peptide stretch, called the 'bait region' which contains specific cleavage sites for different proteinases. When a proteinase cleaves the bait region, a conformational change is induced in the protein which traps the proteinase. The entrapped enzyme remains active against low molecular weight substrates (activity against high molecular weight substrates is greatly reduced). Following cleavage in the bait region, a thioester bond is hydrolyzed and mediates the covalent binding of the protein to the proteinase. In Homo sapiens (Human), this protein is Alpha-2-macroglobulin (A2M).